We begin with the raw amino-acid sequence, 355 residues long: dTDP-glucose 4,6-dehydratase (355 aa).

Residues 12-13, 33-36, 59-60, 81-85, and threonine 100 each bind NAD(+); these read FI, DKLT, DI, and LAAES. Serine 85 contacts substrate. Threonine 134 is a substrate binding site. Catalysis depends on aspartate 135, which acts as the Proton donor. Catalysis depends on proton acceptor residues glutamate 136 and tyrosine 160. An NAD(+)-binding site is contributed by 160–164; the sequence is YSASK. Residue asparagine 189 coordinates substrate. Position 190 (asparagine 190) interacts with NAD(+). Substrate contacts are provided by residues 199–200, 215–217, arginine 224, asparagine 259, and 293–297; these read KL, PVY, and DRPGH.

This sequence belongs to the NAD(P)-dependent epimerase/dehydratase family. dTDP-glucose dehydratase subfamily. Homodimer. It depends on NAD(+) as a cofactor.

It carries out the reaction dTDP-alpha-D-glucose = dTDP-4-dehydro-6-deoxy-alpha-D-glucose + H2O. It functions in the pathway carbohydrate biosynthesis; dTDP-L-rhamnose biosynthesis. It participates in bacterial outer membrane biogenesis; LPS O-antigen biosynthesis. Catalyzes the dehydration of dTDP-D-glucose to form dTDP-6-deoxy-D-xylo-4-hexulose via a three-step process involving oxidation, dehydration and reduction. The polypeptide is dTDP-glucose 4,6-dehydratase (rfbB1) (Neisseria meningitidis serogroup B (strain ATCC BAA-335 / MC58)).